The chain runs to 232 residues: Heptaprenylglyceryl phosphate synthase (232 aa).

Residue Lys12 participates in sn-glycerol 1-phosphate binding. Residues Asp14 and Thr40 each contribute to the Mg(2+) site. Sn-glycerol 1-phosphate is bound by residues 159–164, Gly189, and 209–210; these read YLEYSG and GN.

It belongs to the GGGP/HepGP synthase family. Group I subfamily. Homodimer. Requires Mg(2+) as cofactor.

The catalysed reaction is sn-glycerol 1-phosphate + all-trans-heptaprenyl diphosphate = 3-heptaprenyl-sn-glycero-1-phosphate + diphosphate. The protein operates within membrane lipid metabolism; glycerophospholipid metabolism. Its function is as follows. Prenyltransferase that catalyzes in vivo the transfer of the heptaprenyl moiety of heptaprenyl pyrophosphate (HepPP; 35 carbon atoms) to the C3 hydroxyl of sn-glycerol-1-phosphate (G1P), producing heptaprenylglyceryl phosphate (HepGP). This reaction is an ether-bond-formation step in the biosynthesis of archaea-type G1P-based membrane lipids found in Bacillales. The sequence is that of Heptaprenylglyceryl phosphate synthase from Shouchella clausii (strain KSM-K16) (Alkalihalobacillus clausii).